Reading from the N-terminus, the 121-residue chain is Small ribosomal subunit protein uS11 (121 aa).

This sequence belongs to the universal ribosomal protein uS11 family. In terms of assembly, part of the 30S ribosomal subunit. Interacts with proteins S7 and S18. Binds to IF-3.

Functionally, located on the platform of the 30S subunit, it bridges several disparate RNA helices of the 16S rRNA. Forms part of the Shine-Dalgarno cleft in the 70S ribosome. In Ureaplasma parvum serovar 3 (strain ATCC 27815 / 27 / NCTC 11736), this protein is Small ribosomal subunit protein uS11.